The sequence spans 296 residues: Cobalamin trafficking protein CblD (296 aa).

Residues 1 to 38 (MANVLCNRARLVSYLPGFCSLVKRVVNPKAFSTAGSSG) constitute a mitochondrion transit peptide. N6-acetyllysine is present on Lys-203.

As to quaternary structure, heterodimer with MMACHC. Forms a multiprotein complex with MMACHC, MTR and MTRR. In terms of tissue distribution, widely expressed at high levels.

Its subcellular location is the cytoplasm. It localises to the mitochondrion. In terms of biological role, involved in cobalamin metabolism and trafficking. Plays a role in regulating the biosynthesis and the proportion of two coenzymes, methylcob(III)alamin (MeCbl) and 5'-deoxyadenosylcobalamin (AdoCbl). Promotes oxidation of cob(II)alamin bound to MMACHC. The processing of cobalamin in the cytosol occurs in a multiprotein complex composed of at least MMACHC, MMADHC, MTRR (methionine synthase reductase) and MTR (methionine synthase) which may contribute to shuttle safely and efficiently cobalamin towards MTR in order to produce methionine. The protein is Cobalamin trafficking protein CblD of Homo sapiens (Human).